The sequence spans 94 residues: Cell division protein FtsB (94 aa).

At 1–3 (MRT) the chain is on the cytoplasmic side. The chain crosses the membrane as a helical span at residues 4-21 (FAIFLLIALGWLQYTLWF). Residues 22 to 94 (GKNGMSDYAQ…YRIIDENSEG (73 aa)) lie on the Periplasmic side of the membrane. A coiled-coil region spans residues 33-71 (SNDVALQEEVNQGLRNRNEQMFAEIDDLKKGSEAIEERA).

It belongs to the FtsB family. In terms of assembly, part of a complex composed of FtsB, FtsL and FtsQ.

It is found in the cell inner membrane. Its function is as follows. Essential cell division protein. May link together the upstream cell division proteins, which are predominantly cytoplasmic, with the downstream cell division proteins, which are predominantly periplasmic. This chain is Cell division protein FtsB, found in Aliivibrio fischeri (strain ATCC 700601 / ES114) (Vibrio fischeri).